The sequence spans 262 residues: tRNA pseudouridine synthase A (262 aa).

Asp-56 functions as the Nucleophile in the catalytic mechanism. Tyr-114 is a substrate binding site.

This sequence belongs to the tRNA pseudouridine synthase TruA family. In terms of assembly, homodimer.

It carries out the reaction uridine(38/39/40) in tRNA = pseudouridine(38/39/40) in tRNA. Functionally, formation of pseudouridine at positions 38, 39 and 40 in the anticodon stem and loop of transfer RNAs. The protein is tRNA pseudouridine synthase A of Lactiplantibacillus plantarum (strain ATCC BAA-793 / NCIMB 8826 / WCFS1) (Lactobacillus plantarum).